We begin with the raw amino-acid sequence, 315 residues long: Cobalamin biosynthesis protein CobD (315 aa).

A run of 5 helical transmembrane segments spans residues 48 to 70, 75 to 94, 148 to 170, 208 to 230, and 292 to 314; these read IAGILTSCLVYLISFIIPFLSVQ, LHWILGELLSIMIIYTTIAI, LVDGITTPLFYAVFGGPAWAMLY, ITSYILVLSSLFLGYNFKNSLYI, and LILLSSILTFIFYILIYSGAAYF.

It belongs to the CobD/CbiB family.

The protein resides in the cell membrane. It functions in the pathway cofactor biosynthesis; adenosylcobalamin biosynthesis. Functionally, converts cobyric acid to cobinamide by the addition of aminopropanol on the F carboxylic group. In Leptospira interrogans serogroup Icterohaemorrhagiae serovar copenhageni (strain Fiocruz L1-130), this protein is Cobalamin biosynthesis protein CobD.